Consider the following 216-residue polypeptide: Large ribosomal subunit protein uL24m (216 aa).

Residues 1-9 constitute a mitochondrion transit peptide; it reads MRLSALLAL. The residue at position 24 (Ser24) is a Phosphoserine. Positions 56–89 constitute a KOW domain; that stretch reads LFCGDRVEILEGKDAGKQGKVVQVIRQRNWVVVE.

This sequence belongs to the universal ribosomal protein uL24 family. Component of the mitochondrial ribosome large subunit (39S) which comprises a 16S rRNA and about 50 distinct proteins.

Its subcellular location is the mitochondrion. In Bos taurus (Bovine), this protein is Large ribosomal subunit protein uL24m (MRPL24).